Reading from the N-terminus, the 198-residue chain is Anthranilate synthase component 2 (198 aa).

The 194-residue stretch at 1 to 194 folds into the Glutamine amidotransferase type-1 domain; the sequence is MILIIDNYDS…VNQVNENKES (194 aa). L-glutamine is bound at residue 50 to 52; that stretch reads GPG. Cys77 serves as the catalytic Nucleophile; for GATase activity. Residues Gln81 and 128 to 129 contribute to the L-glutamine site; that span reads SI. Catalysis depends on for GATase activity residues His168 and Glu170.

In terms of assembly, heterotetramer consisting of two non-identical subunits: a beta subunit (TrpG) and a large alpha subunit (TrpE).

It carries out the reaction chorismate + L-glutamine = anthranilate + pyruvate + L-glutamate + H(+). It participates in amino-acid biosynthesis; L-tryptophan biosynthesis; L-tryptophan from chorismate: step 1/5. In terms of biological role, part of a heterotetrameric complex that catalyzes the two-step biosynthesis of anthranilate, an intermediate in the biosynthesis of L-tryptophan. In the first step, the glutamine-binding beta subunit (TrpG) of anthranilate synthase (AS) provides the glutamine amidotransferase activity which generates ammonia as a substrate that, along with chorismate, is used in the second step, catalyzed by the large alpha subunit of AS (TrpE) to produce anthranilate. In the absence of TrpG, TrpE can synthesize anthranilate directly from chorismate and high concentrations of ammonia. In Lactococcus lactis subsp. lactis (strain IL1403) (Streptococcus lactis), this protein is Anthranilate synthase component 2 (trpG).